A 206-amino-acid polypeptide reads, in one-letter code: GTP cyclohydrolase 1 (206 aa).

Residues 1 to 17 (MDAVTPKKDIPRPDSVR) show a composition bias toward basic and acidic residues. The disordered stretch occupies residues 1–23 (MDAVTPKKDIPRPDSVRRPSQQE). Cys-95, His-98, and Cys-166 together coordinate Zn(2+).

Belongs to the GTP cyclohydrolase I family. As to quaternary structure, toroid-shaped homodecamer, composed of two pentamers of five dimers.

The catalysed reaction is GTP + H2O = 7,8-dihydroneopterin 3'-triphosphate + formate + H(+). The protein operates within cofactor biosynthesis; 7,8-dihydroneopterin triphosphate biosynthesis; 7,8-dihydroneopterin triphosphate from GTP: step 1/1. In Hyphomonas neptunium (strain ATCC 15444), this protein is GTP cyclohydrolase 1.